We begin with the raw amino-acid sequence, 295 residues long: Carbapenem-hydrolyzing beta-lactamase transcriptional activator (295 aa).

Residues 5-62 (LPLNALRAFEASARYLNFTKAGLELHVSQAAVSQQVRTLEQMLGVALFTRVPRGLQLT) enclose the HTH lysR-type domain. The H-T-H motif DNA-binding region spans 22–41 (FTKAGLELHVSQAAVSQQVR).

This sequence belongs to the LysR transcriptional regulatory family.

This protein is a positive regulator of gene expression of carbapenem-hydrolyzing beta-lactamase (NmcA). The chain is Carbapenem-hydrolyzing beta-lactamase transcriptional activator (nmcR) from Enterobacter cloacae.